We begin with the raw amino-acid sequence, 361 residues long: 1-deoxy-D-xylulose 5-phosphate reductoisomerase (361 aa).

NADPH contacts are provided by T12, G13, S14, I15, G38, and N102. K103 serves as a coordination point for 1-deoxy-D-xylulose 5-phosphate. Residue E104 coordinates NADPH. D126 serves as a coordination point for Mn(2+). 4 residues coordinate 1-deoxy-D-xylulose 5-phosphate: S127, E128, S152, and H175. Residue E128 coordinates Mn(2+). G181 serves as a coordination point for NADPH. 1-deoxy-D-xylulose 5-phosphate-binding residues include S188, N193, K194, and E197. E197 lines the Mn(2+) pocket.

Belongs to the DXR family. Mg(2+) serves as cofactor. Requires Mn(2+) as cofactor.

The enzyme catalyses 2-C-methyl-D-erythritol 4-phosphate + NADP(+) = 1-deoxy-D-xylulose 5-phosphate + NADPH + H(+). Its pathway is isoprenoid biosynthesis; isopentenyl diphosphate biosynthesis via DXP pathway; isopentenyl diphosphate from 1-deoxy-D-xylulose 5-phosphate: step 1/6. Its function is as follows. Catalyzes the NADPH-dependent rearrangement and reduction of 1-deoxy-D-xylulose-5-phosphate (DXP) to 2-C-methyl-D-erythritol 4-phosphate (MEP). The sequence is that of 1-deoxy-D-xylulose 5-phosphate reductoisomerase from Leifsonia xyli subsp. xyli (strain CTCB07).